The following is a 223-amino-acid chain: Killer cell lectin-like receptor subfamily B member 1B allele B (223 aa).

Residues 1-45 (MDTAVVYADLHLARTGEPKHKSPPSLSPDTCQCPRWHRLALKLGC) lie on the Cytoplasmic side of the membrane. An ITIM motif motif is present at residues 5-10 (VVYADL). The LCK-binding motif signature appears at 31-34 (CQCP). Residues 46–66 (ACLILLVLSVIGLGVLVLTLL) traverse the membrane as a helical; Signal-anchor for type II membrane protein segment. At 67–223 (QKPLIQNSPA…LKCECMCNGS (157 aa)) the chain is on the extracellular side. The region spanning 101-211 (HQDKCFHVSQ…CDSDNLWICQ (111 aa)) is the C-type lectin domain. Disulfide bonds link Cys-122/Cys-210 and Cys-189/Cys-202.

In terms of assembly, homodimer; disulfide-linked. Interacts with tyrosine kinase LCK. Binds PTPN6/SHP-1 in a phosphorylation-dependent manner. Expressed in a subset of natural killer cells.

Its subcellular location is the membrane. Receptor for CLEC2D/OCIL. Ligand-binding contributes to inhibition of cytotoxic natural killer (NK) cells. May mediate MHC class I-independent 'missing-self' recognition of allografts, tumor cells and virus-infected cells. In Rattus norvegicus (Rat), this protein is Killer cell lectin-like receptor subfamily B member 1B allele B.